Here is a 436-residue protein sequence, read N- to C-terminus: Glutamyl-tRNA reductase (436 aa).

Substrate contacts are provided by residues 52-55 (TCHR), Ser105, 110-112 (EDQ), and Gln116. The Nucleophile role is filled by Cys53. An NADP(+)-binding site is contributed by 184–189 (GAGEMG).

The protein belongs to the glutamyl-tRNA reductase family. Homodimer.

The catalysed reaction is (S)-4-amino-5-oxopentanoate + tRNA(Glu) + NADP(+) = L-glutamyl-tRNA(Glu) + NADPH + H(+). The protein operates within porphyrin-containing compound metabolism; protoporphyrin-IX biosynthesis; 5-aminolevulinate from L-glutamyl-tRNA(Glu): step 1/2. Functionally, catalyzes the NADPH-dependent reduction of glutamyl-tRNA(Glu) to glutamate 1-semialdehyde (GSA). The chain is Glutamyl-tRNA reductase from Halobacterium salinarum (strain ATCC 29341 / DSM 671 / R1).